Here is a 649-residue protein sequence, read N- to C-terminus: Quinol oxidase subunit 1 (649 aa).

Over 1-15 (MKFKWDEFFVTGDPL) the chain is Extracellular. The chain crosses the membrane as a helical span at residues 16–34 (ILGAQVSIALSTIAIIFVL). Residues 35–56 (TYFKKWKWLWSEWITTVDHKKL) lie on the Cytoplasmic side of the membrane. A helical transmembrane segment spans residues 57-75 (GIMYIISAVIMLFRGGVDG). Over 76-97 (LMMRAQLALPNNSFLDSNHYNE) the chain is Extracellular. Residues 98 to 117 (IFTTHGTIMIIFMAMPFLIG) traverse the membrane as a helical segment. Residue His102 coordinates Fe(II)-heme a. Residues 118 to 139 (LINVVVPLQIGARDVAFPYLNN) are Cytoplasmic-facing. Residues 140–157 (LSFWTFFVGAMLFNISFV) form a helical membrane-spanning segment. At 158 to 190 (IGGSPNAGWTSYMPLASNDMSPGPGENYYLLGL) the chain is on the extracellular side. The chain crosses the membrane as a helical span at residues 191 to 209 (QIAGIGTLMTGINFMVTIL). Residues 210 to 227 (KMRTKGMTLMRMPMFTWT) are Cytoplasmic-facing. Residues 228–246 (TLITMVIIVFAFPVLTVAL) form a helical membrane-spanning segment. Topologically, residues 247 to 272 (ALLSFDRLFGAHFFTLEAGGMPMLWA) are extracellular. Residues 273–292 (NLFWIWGHPEVYIVILPAFG) form a helical membrane-spanning segment. Positions 280 and 284 each coordinate Cu cation. Residues 280–284 (HPEVY) constitute a cross-link (1'-histidyl-3'-tyrosine (His-Tyr)). Topologically, residues 293–315 (IFSEIISSFARKQLFGYKAMVGS) are cytoplasmic. A helical membrane pass occupies residues 316–335 (IIAISVLSFLVWTHHFFTMG). The Cu cation site is built by His329 and His330. Over 336–343 (NSASVNSF) the chain is Extracellular. Residues 344–362 (FSITTMAISIPTGVKIFNW) traverse the membrane as a helical segment. Over 363-377 (LFTMYKGRISFTTPM) the chain is Cytoplasmic. Residues 378-397 (LWALAFIPNFVIGGVTGVML) form a helical membrane-spanning segment. At 398–405 (AMAAADYQ) the chain is on the extracellular side. Residues 406–425 (YHNTYFLVSHFHYVLIAGTV) form a helical membrane-spanning segment. His415 lines the heme a3 pocket. Fe(II)-heme a is bound at residue His417. Residues 426-452 (FACFAGFIFWYPKMFGHKLNERIGKWF) are Cytoplasmic-facing. Residues 453–472 (FWIFMIGFNICFFPQYFLGL) traverse the membrane as a helical segment. Topologically, residues 473-490 (QGMPRRIYTYGPNDGWTT) are extracellular. A helical transmembrane segment spans residues 491–510 (LNFISTVGAFMMGVGFLILC). At 511 to 584 (YNIYYSFRYS…SKFKKIHMPS (74 aa)) the chain is on the cytoplasmic side. The chain crosses the membrane as a helical span at residues 585-604 (NSGRPFFMSVAFGLAGFGLV). Topologically, residues 605-610 (FEWYWM) are extracellular. A helical transmembrane segment spans residues 611–631 (GVVGLIGVLLCMVLRSFEYDN). The Cytoplasmic segment spans residues 632-649 (GYYISVDEIKETERKISE).

It belongs to the heme-copper respiratory oxidase family. Cu cation is required as a cofactor. Requires ferriheme a as cofactor. The cofactor is Heme A3..

It localises to the cell membrane. The enzyme catalyses 2 a quinol + O2 = 2 a quinone + 2 H2O. It functions in the pathway energy metabolism; oxidative phosphorylation. Catalyzes quinol oxidation with the concomitant reduction of oxygen to water. Major component for energy conversion during vegetative growth. This Bacillus subtilis (strain 168) protein is Quinol oxidase subunit 1 (qoxB).